Here is a 45-residue protein sequence, read N- to C-terminus: Cytochrome b559 subunit beta (45 aa).

Thr2 carries the post-translational modification N-acetylthreonine. Topologically, residues 2-17 (TSNTPNQEPVSYPIFT) are cytoplasmic. A helical membrane pass occupies residues 18–42 (VRWVAVHTLAVPTIFFLGAIAAMQF). Position 24 (His24) interacts with heme. Topologically, residues 43–45 (IQR) are lumenal.

Heterodimer of an alpha subunit and a beta subunit. PSII is composed of 1 copy each of membrane proteins PsbA, PsbB, PsbC, PsbD, PsbE, PsbF, PsbH, PsbI, PsbJ, PsbK, PsbL, PsbM, PsbT, PsbX, PsbY, PsbZ, Psb30/Ycf12, peripheral proteins PsbO, CyanoQ (PsbQ), PsbU, PsbV and a large number of cofactors. It forms dimeric complexes. Part of a photosystem II (PSII) assembly intermediate complex PSII-I; crystallized from a strain deleted of psbJ, it forms monomeric PSII before addition of the oxygen evolving complex. PSII-I includes 3 assembly factors not found in mature PSII (Psb27, Psb28 and Psb34). It depends on heme b as a cofactor.

It localises to the cellular thylakoid membrane. This b-type cytochrome is tightly associated with the reaction center of photosystem II (PSII). PSII is a light-driven water:plastoquinone oxidoreductase that uses light energy to abstract electrons from H(2)O, generating O(2) and a proton gradient subsequently used for ATP formation. It consists of a core antenna complex that captures photons, and an electron transfer chain that converts photonic excitation into a charge separation. The sequence is that of Cytochrome b559 subunit beta from Thermosynechococcus vestitus (strain NIES-2133 / IAM M-273 / BP-1).